The primary structure comprises 149 residues: Transcription antitermination protein NusB (149 aa).

Belongs to the NusB family.

In terms of biological role, involved in transcription antitermination. Required for transcription of ribosomal RNA (rRNA) genes. Binds specifically to the boxA antiterminator sequence of the ribosomal RNA (rrn) operons. This is Transcription antitermination protein NusB from Sphingopyxis alaskensis (strain DSM 13593 / LMG 18877 / RB2256) (Sphingomonas alaskensis).